We begin with the raw amino-acid sequence, 173 residues long: Ribosome maturation factor RimM (173 aa).

Residues 102 to 173 form the PRC barrel domain; that stretch reads EGEYYWSDLI…TMLVDWDPEF (72 aa).

The protein belongs to the RimM family. Binds ribosomal protein uS19.

Its subcellular location is the cytoplasm. In terms of biological role, an accessory protein needed during the final step in the assembly of 30S ribosomal subunit, possibly for assembly of the head region. Essential for efficient processing of 16S rRNA. May be needed both before and after RbfA during the maturation of 16S rRNA. It has affinity for free ribosomal 30S subunits but not for 70S ribosomes. The sequence is that of Ribosome maturation factor RimM from Methylobacillus flagellatus (strain ATCC 51484 / DSM 6875 / VKM B-1610 / KT).